The chain runs to 589 residues: Protein kinase G11A (589 aa).

The interval 1–167 (MASKAMPRAP…SACSSISSVT (167 aa)) is disordered. Composition is skewed to polar residues over residues 15 to 36 (NLQS…SPSK), 46 to 55 (AESSKPNSEV), and 63 to 76 (TQHQ…TGSN). Positions 91-100 (RLADEEKGVV) are enriched in basic and acidic residues. The span at 142-165 (SSSRCRPSTSSDVSDESACSSISS) shows a compositional bias: low complexity. The region spanning 195–533 (FKLLKKLGCG…ATEIKQHPFF (339 aa)) is the Protein kinase domain. ATP contacts are provided by residues 201–209 (LGCGDIGSV) and K224. The Proton acceptor role is filled by D320. Residues 551-589 (RPVEIERPPKQPVSTSEPAAAPSDAAQKSSDSYLEFDFF) are disordered.

Belongs to the protein kinase superfamily. Ser/Thr protein kinase family.

The enzyme catalyses L-seryl-[protein] + ATP = O-phospho-L-seryl-[protein] + ADP + H(+). The catalysed reaction is L-threonyl-[protein] + ATP = O-phospho-L-threonyl-[protein] + ADP + H(+). Its function is as follows. May play a role in the regulation of metabolism and signal transduction processes. This chain is Protein kinase G11A, found in Oryza sativa subsp. indica (Rice).